We begin with the raw amino-acid sequence, 303 residues long: HTH-type transcriptional regulator YjiE (303 aa).

The HTH lysR-type domain maps to 11-68 (IETKWLYDFLTLEKCRNFSQAAVSRNVSQPAFSRRIRALEQAIGVELFNRQVTPLQLS). Residues 28–47 (FSQAAVSRNVSQPAFSRRIR) constitute a DNA-binding region (H-T-H motif).

The protein belongs to the LysR transcriptional regulatory family. Forms dimers, tetramers and possibly dodecameric complexes; oligomerization may be governed by cellular concentrations. DNA-binding seems to decrease oligomerization.

Functionally, protects cells from HOCl (hypochlorite) stress but not peroxide or diamide stress. Decreases the intracellular load of reactive oxygen species by up-regulating genes involved in methionine and cysteine biosynthesis and down-regulating Fur-regulated genes involved in iron acquisition. Has also been suggested to down-regulate expression of the flagellar regulon, decreasing motility, but this activity was not confirmed in a second study. In Escherichia coli (strain K12), this protein is HTH-type transcriptional regulator YjiE (yjiE).